The primary structure comprises 67 residues: Amphipathic peptide Tx348 (67 aa).

A signal peptide spans 1–23 (MKSQAFFLLFLVVLLLATTQSEA). The residue at position 33 (Phe33) is a Phenylalanine amide. Positions 37 to 67 (SMRNMDTMKYLYDPSLSAADLKTLQKLMENY) are excised as a propeptide.

The protein belongs to the non-disulfide-bridged peptide (NDBP) superfamily. Short antimicrobial peptide (group 4) family. In terms of tissue distribution, expressed by the venom gland.

It localises to the secreted. It is found in the target cell membrane. In terms of biological role, amphipathic peptide that has antibacterial activities. This Buthus israelis (Israeli scorpion) protein is Amphipathic peptide Tx348.